Reading from the N-terminus, the 940-residue chain is Vacuolar protein sorting-associated protein 54 (940 aa).

Thr-30 carries the phosphothreonine modification. Positions 192 to 218 (QQLERDKPLENGAQGAPGPGTGGQTPT) are disordered. The stretch at 299 to 325 (HAILAEMEQAADQVRQLRAALAELHSH) forms a coiled coil.

It belongs to the VPS54 family.

Its subcellular location is the golgi apparatus. The protein resides in the trans-Golgi network. May be involved in retrograde transport from early and late endosomes to late Golgi. Required during spermatogenesis for sperm individualization. The polypeptide is Vacuolar protein sorting-associated protein 54 (scat) (Drosophila melanogaster (Fruit fly)).